Here is a 206-residue protein sequence, read N- to C-terminus: Cytochrome b6-f complex iron-sulfur subunit, chloroplastic (206 aa).

The N-terminal 29 residues, 1–29 (MAMITSRRAAAPCKAQATRRSRVMSVVRA), are a transit peptide targeting the chloroplast. Residues 48 to 68 (ILLGGASLPVGSLALGYGAFF) traverse the membrane as a helical segment. The Rieske domain maps to 92–188 (ANAWLATHQK…CDVQEDGLVT (97 aa)). Residues cysteine 134, histidine 136, cysteine 152, and histidine 155 each contribute to the [2Fe-2S] cluster site. Cysteine 139 and cysteine 154 are disulfide-bonded.

This sequence belongs to the Rieske iron-sulfur protein family. As to quaternary structure, the 4 large subunits of the cytochrome b6-f complex are cytochrome b6, subunit IV (17 kDa polypeptide, petD), cytochrome f and the Rieske protein, while the 4 small subunits are petG, petL, petM and petN. The complex functions as a dimer. [2Fe-2S] cluster serves as cofactor.

It is found in the plastid. It localises to the chloroplast thylakoid membrane. It carries out the reaction 2 oxidized [plastocyanin] + a plastoquinol + 2 H(+)(in) = 2 reduced [plastocyanin] + a plastoquinone + 4 H(+)(out). Its function is as follows. Component of the cytochrome b6-f complex, which mediates electron transfer between photosystem II (PSII) and photosystem I (PSI), cyclic electron flow around PSI, and state transitions. The protein is Cytochrome b6-f complex iron-sulfur subunit, chloroplastic (petC) of Volvox carteri (Green alga).